A 132-amino-acid chain; its full sequence is Small ribosomal subunit protein uS8 (132 aa).

The protein belongs to the universal ribosomal protein uS8 family. In terms of assembly, part of the 30S ribosomal subunit. Contacts proteins S5 and S12.

Its function is as follows. One of the primary rRNA binding proteins, it binds directly to 16S rRNA central domain where it helps coordinate assembly of the platform of the 30S subunit. This Bacillus velezensis (strain DSM 23117 / BGSC 10A6 / LMG 26770 / FZB42) (Bacillus amyloliquefaciens subsp. plantarum) protein is Small ribosomal subunit protein uS8.